A 98-amino-acid chain; its full sequence is Integration host factor subunit beta (98 aa).

Belongs to the bacterial histone-like protein family. As to quaternary structure, heterodimer of an alpha and a beta chain.

Its function is as follows. This protein is one of the two subunits of integration host factor, a specific DNA-binding protein that functions in genetic recombination as well as in transcriptional and translational control. The chain is Integration host factor subunit beta from Pseudomonas putida (strain W619).